Consider the following 509-residue polypeptide: ATP synthase subunit alpha (509 aa).

Residue 169-176 (GDRKTGKT) participates in ATP binding.

Belongs to the ATPase alpha/beta chains family. F-type ATPases have 2 components, CF(1) - the catalytic core - and CF(0) - the membrane proton channel. CF(1) has five subunits: alpha(3), beta(3), gamma(1), delta(1), epsilon(1). CF(0) has three main subunits: a(1), b(2) and c(9-12). The alpha and beta chains form an alternating ring which encloses part of the gamma chain. CF(1) is attached to CF(0) by a central stalk formed by the gamma and epsilon chains, while a peripheral stalk is formed by the delta and b chains.

The protein localises to the cell membrane. It carries out the reaction ATP + H2O + 4 H(+)(in) = ADP + phosphate + 5 H(+)(out). Produces ATP from ADP in the presence of a proton gradient across the membrane. The alpha chain is a regulatory subunit. The chain is ATP synthase subunit alpha from Limosilactobacillus reuteri (strain DSM 20016) (Lactobacillus reuteri).